Here is an 850-residue protein sequence, read N- to C-terminus: Probable beta-glucosidase J (850 aa).

Asn-43 and Asn-52 each carry an N-linked (GlcNAc...) asparagine glycan. Asp-254 is an active-site residue. Residues 423–583 (TGERGYTFRV…DAETAIKQAV (161 aa)) enclose the PA14 domain. Residue Asn-508 is glycosylated (N-linked (GlcNAc...) asparagine).

The protein belongs to the glycosyl hydrolase 3 family.

It localises to the secreted. It carries out the reaction Hydrolysis of terminal, non-reducing beta-D-glucosyl residues with release of beta-D-glucose.. The protein operates within glycan metabolism; cellulose degradation. Functionally, beta-glucosidases are one of a number of cellulolytic enzymes involved in the degradation of cellulosic biomass. Catalyzes the last step releasing glucose from the inhibitory cellobiose. This Emericella nidulans (strain FGSC A4 / ATCC 38163 / CBS 112.46 / NRRL 194 / M139) (Aspergillus nidulans) protein is Probable beta-glucosidase J (bglJ).